The primary structure comprises 270 residues: NADPH-dependent 7-cyano-7-deazaguanine reductase (270 aa).

79–81 (IES) serves as a coordination point for substrate. 81–82 (SK) provides a ligand contact to NADPH. The Thioimide intermediate role is filled by C177. The active-site Proton donor is the D184. 216 to 217 (HE) is a binding site for substrate. Position 245 to 246 (245 to 246 (RG)) interacts with NADPH.

It belongs to the GTP cyclohydrolase I family. QueF type 2 subfamily. Homodimer.

The protein localises to the cytoplasm. The enzyme catalyses 7-aminomethyl-7-carbaguanine + 2 NADP(+) = 7-cyano-7-deazaguanine + 2 NADPH + 3 H(+). Its pathway is tRNA modification; tRNA-queuosine biosynthesis. In terms of biological role, catalyzes the NADPH-dependent reduction of 7-cyano-7-deazaguanine (preQ0) to 7-aminomethyl-7-deazaguanine (preQ1). In Acinetobacter baumannii (strain ATCC 17978 / DSM 105126 / CIP 53.77 / LMG 1025 / NCDC KC755 / 5377), this protein is NADPH-dependent 7-cyano-7-deazaguanine reductase.